Consider the following 248-residue polypeptide: 3-deoxy-manno-octulosonate cytidylyltransferase (248 aa).

Belongs to the KdsB family. Mg(2+) serves as cofactor.

Its subcellular location is the cytoplasm. The catalysed reaction is 3-deoxy-alpha-D-manno-oct-2-ulosonate + CTP = CMP-3-deoxy-beta-D-manno-octulosonate + diphosphate. The protein operates within nucleotide-sugar biosynthesis; CMP-3-deoxy-D-manno-octulosonate biosynthesis; CMP-3-deoxy-D-manno-octulosonate from 3-deoxy-D-manno-octulosonate and CTP: step 1/1. It participates in bacterial outer membrane biogenesis; lipopolysaccharide biosynthesis. Activates KDO (a required 8-carbon sugar) for incorporation into bacterial lipopolysaccharide in Gram-negative bacteria. This Escherichia coli O157:H7 protein is 3-deoxy-manno-octulosonate cytidylyltransferase.